The sequence spans 53 residues: Tryptophan RNA-binding attenuator protein inhibitory protein (53 aa).

CXXCXGXG motif repeat units follow at residues 12–19 (CPKCERAG) and 26–33 (CPACSGKG).

In terms of assembly, homopentamer or homohexamer.

It localises to the cytoplasm. Functionally, by forming a complex with tryptophan-activated TRAP, and masking its RNA binding site, it inhibits TRAP's RNA binding ability, thereby abolishing TRAP regulation of gene expression, leading to antitermination and increased trp operon expression. AT acts by competing with messenger RNA for the RNA binding domain of TRAP. This Bacillus subtilis (strain 168) protein is Tryptophan RNA-binding attenuator protein inhibitory protein (rtpA).